Consider the following 137-residue polypeptide: 5-hydroxyisourate hydrolase (137 aa).

Positions 1–23 are cleaved as a signal peptide; the sequence is MLKRYLVLSVVTAAFSLPSLVYA. Positions 32, 70, and 134 each coordinate substrate.

This sequence belongs to the transthyretin family. 5-hydroxyisourate hydrolase subfamily. As to quaternary structure, homotetramer.

It localises to the periplasm. The enzyme catalyses 5-hydroxyisourate + H2O = 5-hydroxy-2-oxo-4-ureido-2,5-dihydro-1H-imidazole-5-carboxylate + H(+). In terms of biological role, catalyzes the hydrolysis of 5-hydroxyisourate (HIU) to 2-oxo-4-hydroxy-4-carboxy-5-ureidoimidazoline (OHCU). This Escherichia coli O157:H7 protein is 5-hydroxyisourate hydrolase (hiuH).